Consider the following 481-residue polypeptide: Glutamate--tRNA ligase (481 aa).

The 'HIGH' region signature appears at 11 to 21 (PSPTGLLHIGN). The short motif at 255–259 (KLSKR) is the 'KMSKS' region element. An ATP-binding site is contributed by Lys258.

Belongs to the class-I aminoacyl-tRNA synthetase family. Glutamate--tRNA ligase type 1 subfamily. Monomer.

Its subcellular location is the cytoplasm. It catalyses the reaction tRNA(Glu) + L-glutamate + ATP = L-glutamyl-tRNA(Glu) + AMP + diphosphate. Catalyzes the attachment of glutamate to tRNA(Glu) in a two-step reaction: glutamate is first activated by ATP to form Glu-AMP and then transferred to the acceptor end of tRNA(Glu). The protein is Glutamate--tRNA ligase of Streptococcus pyogenes serotype M6 (strain ATCC BAA-946 / MGAS10394).